The chain runs to 215 residues: Thymidylate kinase (215 aa).

11–18 (GIDGAGKS) is an ATP binding site.

The protein belongs to the thymidylate kinase family.

It catalyses the reaction dTMP + ATP = dTDP + ADP. Functionally, phosphorylation of dTMP to form dTDP in both de novo and salvage pathways of dTTP synthesis. The sequence is that of Thymidylate kinase from Nitrosomonas eutropha (strain DSM 101675 / C91 / Nm57).